Consider the following 486-residue polypeptide: L-arabinose isomerase (486 aa).

Positions 299, 324, 341, and 440 each coordinate Mn(2+).

This sequence belongs to the arabinose isomerase family. Mn(2+) serves as cofactor.

It carries out the reaction beta-L-arabinopyranose = L-ribulose. The protein operates within carbohydrate degradation; L-arabinose degradation via L-ribulose; D-xylulose 5-phosphate from L-arabinose (bacterial route): step 1/3. Functionally, catalyzes the conversion of L-arabinose to L-ribulose. This is L-arabinose isomerase from Shouchella clausii (strain KSM-K16) (Alkalihalobacillus clausii).